The following is a 303-amino-acid chain: Aspartate carbamoyltransferase catalytic subunit (303 aa).

Residues Arg-49 and Thr-50 each coordinate carbamoyl phosphate. Lys-77 contacts L-aspartate. Carbamoyl phosphate contacts are provided by Arg-99, His-126, and Gln-129. Residues Arg-159 and Arg-211 each contribute to the L-aspartate site. Carbamoyl phosphate is bound by residues Ser-252 and Pro-253.

It belongs to the aspartate/ornithine carbamoyltransferase superfamily. ATCase family. Heterododecamer (2C3:3R2) of six catalytic PyrB chains organized as two trimers (C3), and six regulatory PyrI chains organized as three dimers (R2).

It catalyses the reaction carbamoyl phosphate + L-aspartate = N-carbamoyl-L-aspartate + phosphate + H(+). It participates in pyrimidine metabolism; UMP biosynthesis via de novo pathway; (S)-dihydroorotate from bicarbonate: step 2/3. In terms of biological role, catalyzes the condensation of carbamoyl phosphate and aspartate to form carbamoyl aspartate and inorganic phosphate, the committed step in the de novo pyrimidine nucleotide biosynthesis pathway. The chain is Aspartate carbamoyltransferase catalytic subunit from Listeria innocua serovar 6a (strain ATCC BAA-680 / CLIP 11262).